The sequence spans 501 residues: Acetylcholine receptor subunit beta (501 aa).

The N-terminal stretch at 1–23 (MTPGALLMLLGALGAPLAPGVRG) is a signal peptide. Residues 24–244 (SEAEGRLREK…VIFYLIIRRK (221 aa)) lie on the Extracellular side of the membrane. A disulfide bridge connects residues Cys151 and Cys165. Asn164 is a glycosylation site (N-linked (GlcNAc...) asparagine). A run of 3 helical transmembrane segments spans residues 245-269 (PLFY…VFYL), 277-295 (MGLS…LLLA), and 311-332 (YLMF…VLNL). The Cytoplasmic segment spans residues 333-469 (HHRSPHTHQM…WQFVAMVVDR (137 aa)). Tyr390 is subject to Phosphotyrosine; by Tyr-kinases. A helical membrane pass occupies residues 470-488 (LFLWTFIIFTSVGTLVIFL).

Belongs to the ligand-gated ion channel (TC 1.A.9) family. Acetylcholine receptor (TC 1.A.9.1) subfamily. Beta-1/CHRNB1 sub-subfamily. In terms of assembly, pentamer of two alpha chains, and one each of the beta, delta, and gamma (in immature muscle) or epsilon (in mature muscle) chains. The muscle heteropentamer composed of alpha-1, beta-1, delta, epsilon subunits interacts with the alpha-conotoxin ImII.

It is found in the postsynaptic cell membrane. It localises to the cell membrane. It carries out the reaction K(+)(in) = K(+)(out). It catalyses the reaction Na(+)(in) = Na(+)(out). Its function is as follows. After binding acetylcholine, the AChR responds by an extensive change in conformation that affects all subunits and leads to opening of an ion-conducting channel across the plasma membrane. This chain is Acetylcholine receptor subunit beta, found in Homo sapiens (Human).